The following is a 260-amino-acid chain: GTP cyclohydrolase FolE2 (260 aa).

This sequence belongs to the GTP cyclohydrolase IV family.

It carries out the reaction GTP + H2O = 7,8-dihydroneopterin 3'-triphosphate + formate + H(+). It functions in the pathway cofactor biosynthesis; 7,8-dihydroneopterin triphosphate biosynthesis; 7,8-dihydroneopterin triphosphate from GTP: step 1/1. In terms of biological role, converts GTP to 7,8-dihydroneopterin triphosphate. The sequence is that of GTP cyclohydrolase FolE2 from Desulfovibrio desulfuricans (strain ATCC 27774 / DSM 6949 / MB).